Consider the following 327-residue polypeptide: Glycerol-3-phosphate dehydrogenase [NAD(P)+] (327 aa).

Residues tryptophan 13, histidine 33, and lysine 102 each coordinate NADPH. Sn-glycerol 3-phosphate is bound by residues lysine 102, glycine 130, and serine 132. Alanine 134 lines the NADPH pocket. Sn-glycerol 3-phosphate is bound by residues lysine 185, aspartate 238, serine 248, arginine 249, and asparagine 250. Lysine 185 acts as the Proton acceptor in catalysis. Arginine 249 is a binding site for NADPH. Glutamate 275 is a binding site for NADPH.

It belongs to the NAD-dependent glycerol-3-phosphate dehydrogenase family.

It is found in the cytoplasm. It carries out the reaction sn-glycerol 3-phosphate + NAD(+) = dihydroxyacetone phosphate + NADH + H(+). The enzyme catalyses sn-glycerol 3-phosphate + NADP(+) = dihydroxyacetone phosphate + NADPH + H(+). It functions in the pathway membrane lipid metabolism; glycerophospholipid metabolism. In terms of biological role, catalyzes the reduction of the glycolytic intermediate dihydroxyacetone phosphate (DHAP) to sn-glycerol 3-phosphate (G3P), the key precursor for phospholipid synthesis. The sequence is that of Glycerol-3-phosphate dehydrogenase [NAD(P)+] from Vesicomyosocius okutanii subsp. Calyptogena okutanii (strain HA).